The sequence spans 204 residues: Urease accessory protein UreG (204 aa).

Position 11–18 (11–18 (GPVGAGKH)) interacts with GTP.

The protein belongs to the SIMIBI class G3E GTPase family. UreG subfamily. In terms of assembly, homodimer. UreD, UreF and UreG form a complex that acts as a GTP-hydrolysis-dependent molecular chaperone, activating the urease apoprotein by helping to assemble the nickel containing metallocenter of UreC. The UreE protein probably delivers the nickel.

The protein localises to the cytoplasm. Functionally, facilitates the functional incorporation of the urease nickel metallocenter. This process requires GTP hydrolysis, probably effectuated by UreG. The chain is Urease accessory protein UreG from Staphylococcus xylosus.